A 309-amino-acid chain; its full sequence is uncharacterized protein (309 aa).

This is an uncharacterized protein from Aquifex aeolicus (strain VF5).